We begin with the raw amino-acid sequence, 947 residues long: Protocadherin alpha-4 (947 aa).

Positions 1–29 (MEFSWGSGQESRRLLLLLLLLAAWEAGNG) are cleaved as a signal peptide. Cadherin domains are found at residues 30–133 (QLHY…PPVF), 134–242 (PATQ…APAF), 243–350 (DRTI…VPDL), 351–455 (EFKS…APAF), 456–565 (AQPE…APAL), and 588–678 (GHVV…APKA). At 30–697 (QLHYSVSEEA…GPDAALVDVN (668 aa)) the chain is on the extracellular side. Cys96 and Cys102 are oxidised to a cystine. Residues Asn139, Asn257, and Asn265 are each glycosylated (N-linked (GlcNAc...) asparagine). Asn548 carries N-linked (GlcNAc...) asparagine glycosylation. Residues 698–718 (VYLIIAICAVSSLLVLTLLLY) traverse the membrane as a helical segment. Residues 719-947 (TALRCSALPT…GNSTTDNSDQ (229 aa)) are Cytoplasmic-facing. PXXP repeat units lie at residues 734 to 737 (PGKP), 774 to 777 (PSLP), 796 to 799 (PRQP), 829 to 832 (PGGP), 870 to 873 (PGNP), and 888 to 891 (PGSP). The tract at residues 734 to 891 (PGKPTLVCSS…PDKFIIPGSP (158 aa)) is 6 X 4 AA repeats of P-X-X-P. A required for interaction with FYN region spans residues 738 to 947 (TLVCSSAVGS…GNSTTDNSDQ (210 aa)). 3 disordered regions span residues 754–805 (RRPR…DWRY), 828–853 (GPGGPDQQWPTVSSATPEPEAGEVSP), and 868–947 (YGPG…NSDQ). The span at 906-920 (DKSDFITFGKKEETK) shows a compositional bias: basic and acidic residues.

As to quaternary structure, forms homodimers in trans (molecules expressed by two different cells). Forms promiscuous heterodimers in cis (at the plasma membrane of the same cell) with other protocadherins. Interacts with FYN.

It localises to the cell membrane. Calcium-dependent cell-adhesion protein involved in cells self-recognition and non-self discrimination. Thereby, it is involved in the establishment and maintenance of specific neuronal connections in the brain. The protein is Protocadherin alpha-4 of Homo sapiens (Human).